The following is a 713-amino-acid chain: P-loop NTPase domain-containing protein LPA1 homolog (713 aa).

3 disordered regions span residues 218–249 (AKKR…PIGK), 504–575 (TSQA…EDLS), and 650–713 (LDSP…APDK). The segment covering 231–246 (DFDKTRPLNDKPDGKP) has biased composition (basic and acidic residues). A compositionally biased stretch (polar residues) spans 504-531 (TSQAGSVNESWDNANEGTGSHVPSSSGS). Residues 533 to 544 (KKLDGHCKEIKE) are compositionally biased toward basic and acidic residues. Over residues 551–562 (SDDDEEEEEEAA) the composition is skewed to acidic residues. The segment covering 656–668 (ARSSSALPISASS) has biased composition (low complexity).

In terms of biological role, required for the accumulation of phytic acid in seeds. Phytic acid is the primary storage form of phosphorus in cereal grains and other plant seeds. The sequence is that of P-loop NTPase domain-containing protein LPA1 homolog from Oryza sativa subsp. japonica (Rice).